The following is a 247-amino-acid chain: AA9 family lytic polysaccharide monooxygenase A (247 aa).

Residues 1-19 (MVRLASLAVLGSVIATASA) form the signal peptide. Cu(2+)-binding residues include H20 and H100. A disulfide bridge links C60 with C185. H165 is an O2 binding site. Y182 is a binding site for Cu(2+). A glycan (N-linked (GlcNAc...) asparagine) is linked at N193.

It belongs to the polysaccharide monooxygenase AA9 family. It depends on Cu(2+) as a cofactor.

The protein localises to the secreted. It catalyses the reaction [(1-&gt;4)-beta-D-glucosyl]n+m + reduced acceptor + O2 = 4-dehydro-beta-D-glucosyl-[(1-&gt;4)-beta-D-glucosyl]n-1 + [(1-&gt;4)-beta-D-glucosyl]m + acceptor + H2O.. In terms of biological role, lytic polysaccharide monooxygenase (LPMO) that depolymerizes polysaccharides via the oxidation of scissile alpha- or beta-(1-4)-glycosidic bonds, yielding C4 oxidation products. Catalysis by LPMOs requires the reduction of the active-site copper from Cu(II) to Cu(I) by a reducing agent and H(2)O(2) or O(2) as a cosubstrate. Shows C4-oxidative cleavage of amorphous cellulose and soluble cello-oligosaccharides. Also active on xyloglucan, mixed-linkage beta-glucan, and glucomannan. Not active on crystalline forms of cellulose. Has higher affinity for linear substrates compared to branched substrates. Catalyzes a fast and specific peroxygenase reaction that is at least two orders of magnitude faster than the apparent monooxygenase reaction. This chain is AA9 family lytic polysaccharide monooxygenase A, found in Schizophyllum commune (strain H4-8 / FGSC 9210) (Split gill fungus).